A 144-amino-acid chain; its full sequence is MVSFLGGGLLGNPLSGALEEKEDKKEGDEEEDPEIAEAKREAEEKRNEKYRKMEEEREVMRQGIRDKYHIQKKELPKEDPGLEGRLGRKKKSPDEAVEGGDPLQSSAQSSGFPKNLDDLTAKVKELPGTVMTTVSGATDKCNLQ.

The span at Met-1–Leu-10 shows a compositional bias: gly residues. The tract at residues Met-1 to Leu-119 is disordered. Basic and acidic residues-rich tracts occupy residues Leu-18–Gly-27 and Ala-36–Leu-86. The stretch at Glu-29–Lys-67 forms a coiled coil. A compositionally biased stretch (polar residues) spans Leu-103–Phe-112. A Cysteine methyl ester modification is found at Cys-141. Residue Cys-141 is the site of S-farnesyl cysteine attachment. A propeptide spans Asn-142 to Gln-144 (removed in mature form).

Belongs to the complexin/synaphin family. As to quaternary structure, binds to the SNARE core complex containing SNAP25, synaptobrevin and syntaxin-1. Expressed in a subset of neurons in the central nervous system, including large serotoninergic Retzius neurons and pressure-sensitive P cells.

The protein localises to the membrane. Positively regulates a late step in synaptic vesicle exocytosis. This chain is Complexin-1 (cpx1), found in Hirudo medicinalis (Medicinal leech).